Consider the following 484-residue polypeptide: MASDGHLAAPLLDGGGGVDDAALLRRLYVGHFLARWGARMWEFSVGLYMIRIWPGSLLLTAVYGVVEASAVAALGPIVGAVVDRLAYLQVLRLWLLLQGASFVAAGVSVTALLVYGARLAAAGFPAFVALVVVTNVSGALAALSTLAGTILIEREWVVVIAGGQPAAVLTGINSVIRRIDLSCKLLAPVLSGFFISFVSMEASAAALAAWNLAAVWVQYWLFVSVYAGFPALSETSQISRRRADDDEAAAAAQPQKVERLWMTMLPCWESWAVYARQEVVLPGVALAFLYFTVLSFGTLMTATLDWEGIPAYVISLARGVSAAVGIAATWVYPAAHARVSTLRAGLWSIWAQWCCLLVCVASVWAGGAAPLASAWMLMGGVAASRLGLWMFDLAVMQLMQDGVPESDRCVVGGVQNSLQSMFDLLTYVMGIIVSDPRDFGELIVLSFFLVTCAAAMYTMHVYRVRKHLFHLDRILPKMNWIKAS.

11 consecutive transmembrane segments (helical) span residues 58 to 78, 94 to 114, 123 to 143, 189 to 209, 212 to 232, 279 to 299, 308 to 328, 346 to 366, 377 to 397, 413 to 433, and 442 to 462; these read LLTA…GPIV, WLLL…ALLV, GFPA…LAAL, VLSG…ALAA, LAAV…FPAL, VVLP…FGTL, GIPA…GIAA, LWSI…VWAG, LMGG…AVMQ, GVQN…GIIV, and LIVL…MHVY.

It belongs to the ferroportin (FP) (TC 2.A.100) family. SLC40A subfamily.

The protein localises to the membrane. Functionally, may be involved in iron transport and iron homeostasis. This chain is Solute carrier family 40 member 1, found in Oryza sativa subsp. japonica (Rice).